Consider the following 358-residue polypeptide: MSSPLEKPQIIAHVQKPVTYTLFDCKWIPCSAKFVCVGNLARGSGVLQVYEIQQGEAKLLQEAEKPKPIKCGTFGASSLQQRYLATGDFGGNLNIWNLEAPDTPVYSAKGHNEIINCIDGVGGVGIGEGAPEIVTGSRDGTVKVWDPRQKDTPVANMEPAAGETKRDCWTVAFGHAYNEQERLVCAGYDNGDIKLFDLRNMSVRWETNIKNGVCSLEFDRKDIVMNKLVATSLEGKFHVFDMRTQHPSKGFASMSEKAHKSTIWQVRHLPQNRDVFMTSGGAGNLHLWKYEYPAQRSRKDSDDVDMGVAGSVSLLQNVTLSTQPISSMDWSPDKKGLCVCTSFDQTVRVLIVTKLNKL.

6 WD repeats span residues 64–106 (EKPK…TPVY), 116–155 (NCIDGVGGVGIGEGAPEIVTGSRDGTVKVWDPRQKDTPVA), 163–206 (ETKR…VRWE), 208–250 (NIKN…PSKG), 258–298 (AHKS…QRSR), and 320–358 (LSTQPISSMDWSPDKKGLCVCTSFDQTVRVLIVTKLNKL).

Interacts with PIH1D1; the interaction associates DNAAF10 with the R2TP complex. Interacts with several dynein axonemal assembly factors.

It localises to the dynein axonemal particle. In terms of biological role, key assembly factor specifically required for the stability of axonemal dynein heavy chains in cytoplasm. This is Dynein axonemal assembly factor 10 (dnaaf10) from Xenopus tropicalis (Western clawed frog).